A 137-amino-acid chain; its full sequence is Ribosome-binding factor A (137 aa).

This sequence belongs to the RbfA family. Monomer. Binds 30S ribosomal subunits, but not 50S ribosomal subunits or 70S ribosomes.

The protein localises to the cytoplasm. Its function is as follows. One of several proteins that assist in the late maturation steps of the functional core of the 30S ribosomal subunit. Associates with free 30S ribosomal subunits (but not with 30S subunits that are part of 70S ribosomes or polysomes). Required for efficient processing of 16S rRNA. May interact with the 5'-terminal helix region of 16S rRNA. This is Ribosome-binding factor A from Nitrobacter hamburgensis (strain DSM 10229 / NCIMB 13809 / X14).